The primary structure comprises 219 residues: MDFGDDFAAKEDVDPAAEFLAREQSALGDLEAEITGGSASAPPAASTDEGLGELLGGTASEGDLLSAGGTGGLESSTGSFEVIGGESNEPVGISGPPPSREEPEKIRKWREEQKQRLEEKDIEEERKKEELRQQSKKELDDWLRQIGESISKTKLASRNAEKQAATLENGTIEPGTEWERIAKLCDFNPKVNKAGKDVSRMRSIYLHLKQNPIQVQKST.

A disordered region spans residues 32–136 (AEITGGSASA…KKEELRQQSK (105 aa)). Residues 96 to 158 (PPPSREEPEK…SISKTKLASR (63 aa)) form an involved in binding clathrin heavy chain region. Residues 99–136 (SREEPEKIRKWREEQKQRLEEKDIEEERKKEELRQQSK) show a composition bias toward basic and acidic residues.

The protein belongs to the clathrin light chain family. As to quaternary structure, clathrin coats are formed from molecules containing 3 heavy chains and 3 light chains.

It localises to the cytoplasmic vesicle membrane. It is found in the membrane. Its subcellular location is the coated pit. Functionally, clathrin is the major protein of the polyhedral coat of coated pits and vesicles. The chain is Clathrin light chain (Clc) from Drosophila melanogaster (Fruit fly).